Reading from the N-terminus, the 104-residue chain is Replication restart protein PriB (104 aa).

Residues 1 to 101 (MTNRLVLSGT…LHAEQIELID (101 aa)) form the SSB domain.

Belongs to the PriB family. In terms of assembly, homodimer. Interacts with PriA and DnaT. Component of the replication restart primosome. Primosome assembly occurs via a 'hand-off' mechanism. PriA binds to replication forks, subsequently PriB then DnaT bind; DnaT then displaces ssDNA to generate the helicase loading substrate.

Its function is as follows. Involved in the restart of stalled replication forks, which reloads the replicative helicase on sites other than the origin of replication; the PriA-PriB pathway is the major replication restart pathway. During primosome assembly it facilitates complex formation between PriA and DnaT on DNA; stabilizes PriA on DNA. Stimulates the DNA unwinding activity of PriA helicase. This chain is Replication restart protein PriB, found in Shigella dysenteriae serotype 1 (strain Sd197).